An 807-amino-acid chain; its full sequence is Glycerol-3-phosphate acyltransferase (807 aa).

The HXXXXD motif motif lies at 309 to 314 (CHRSHM).

This sequence belongs to the GPAT/DAPAT family.

It localises to the cell inner membrane. The enzyme catalyses sn-glycerol 3-phosphate + an acyl-CoA = a 1-acyl-sn-glycero-3-phosphate + CoA. The protein operates within phospholipid metabolism; CDP-diacylglycerol biosynthesis; CDP-diacylglycerol from sn-glycerol 3-phosphate: step 1/3. This chain is Glycerol-3-phosphate acyltransferase, found in Aeromonas hydrophila subsp. hydrophila (strain ATCC 7966 / DSM 30187 / BCRC 13018 / CCUG 14551 / JCM 1027 / KCTC 2358 / NCIMB 9240 / NCTC 8049).